The primary structure comprises 645 residues: MSERKEGRGKGKGKKKDRGSRGKPAPAEGDPSPALPPRLKEMKSQESAAGSKLVLRCETSSEYSSLRFKWFKNGNELNRRNKPQNVKIQKKPGKSELRINKASLADSGEYMCKVISKLGNDSASANITIVESNDLTTGMSASTERPYVSSESPIRISVSTEGANTSSSTSTSTTGTSHLIKCAEKEKTFCVNGGECFMVKDLSNPSRYLCKCPNEFTGDRCQNYVMASFYKHLGIEFMEAEELYQKRVLTITGICIALLVVGIMCVVAYCKTKKQRQKLHDRLRQSLRSERNNMVNIANGPHHPNPPPENVQLVNQYVSKNVISSEHIVEREVETSFSTSHYTSTAHHSTTVTQTPSHSWSNGHTESIISESHSVIMMSSVENSRHSSPAGGPRGRLHGLGGPRECNSFLRHARETPDSYRDSPHSERYVSAMTTPARMSPVDFHTPSSPKSPPSEMSPPVSSMTVSMPSVAVSPFVEEERPLLLVTPPRLREKKYDHHPQQLNSFHHNPAHQSTSLPPSPLRIVEDEEYETTQEYEPIQEPIKKVTNSRRAKRTKPNGHIANRLEMDSNPSSVSSNSESETEDERVGEDTPFLGIQNPLAASLEVAPAFRLAESRTNPAGRFSTQEELQARLSSVIANQDPIAV.

Positions 1 to 19 are excised as a propeptide; sequence MSERKEGRGKGKGKKKDRG. The tract at residues 1–52 is disordered; sequence MSERKEGRGKGKGKKKDRGSRGKPAPAEGDPSPALPPRLKEMKSQESAAGSK. At 20 to 247 the chain is on the extracellular side; the sequence is SRGKPAPAEG…MEAEELYQKR (228 aa). The Ig-like C2-type domain occupies 37 to 128; it reads PRLKEMKSQE…GNDSASANIT (92 aa). Cys57 and Cys112 are oxidised to a cystine. Positions 139 to 164 are enriched in polar residues; that stretch reads MSASTERPYVSSESPIRISVSTEGAN. The disordered stretch occupies residues 139-175; it reads MSASTERPYVSSESPIRISVSTEGANTSSSTSTSTTG. Positions 165-175 are enriched in low complexity; the sequence is TSSSTSTSTTG. Residues 178–222 form the EGF-like domain; that stretch reads HLIKCAEKEKTFCVNGGECFMVKDLSNPSRYLCKCPNEFTGDRCQ. 3 disulfides stabilise this stretch: Cys182/Cys196, Cys190/Cys210, and Cys212/Cys221. The chain crosses the membrane as a helical span at residues 248–268; that stretch reads VLTITGICIALLVVGIMCVVA. At 269–645 the chain is on the cytoplasmic side; sequence YCKTKKQRQK…VIANQDPIAV (377 aa). Positions 340–355 are enriched in low complexity; the sequence is SHYTSTAHHSTTVTQT. Disordered stretches follow at residues 340-364, 380-406, 433-463, and 531-593; these read SHYTSTAHHSTTVTQTPSHSWSNGH, SVENSRHSSPAGGPRGRLHGLGGPREC, MTTPARMSPVDFHTPSSPKSPPSEMSPPVSS, and ETTQ…DTPF. Over residues 392–402 the composition is skewed to gly residues; the sequence is GPRGRLHGLGG. The segment covering 547 to 557 has biased composition (basic residues); that stretch reads TNSRRAKRTKP. Residues 568–579 are compositionally biased toward low complexity; the sequence is DSNPSSVSSNSE.

The protein belongs to the neuregulin family. In terms of assembly, the cytoplasmic domain interacts with the LIM domain region of LIMK1. Forms a ternary complex with ERBB3 and ITGAV:ITGB3 or ITGA6:ITGB4. Interacts with NRDC and BACE1. Proteolytic cleavage close to the plasma membrane on the external face leads to the release of the soluble growth factor form. In terms of processing, N- and O-glycosylated. Extensive glycosylation precedes the proteolytic cleavage.

Its subcellular location is the cell membrane. It localises to the secreted. Functionally, direct ligand for ERBB3 and ERBB4 tyrosine kinase receptors. Concomitantly recruits ERBB1 and ERBB2 coreceptors, resulting in ligand-stimulated tyrosine phosphorylation and activation of the ERBB receptors. Perform diverse functions such as inducing growth and differentiation of epithelial, glial, neuronal, and skeletal muscle cells; inducing expression of acetylcholine receptor in synaptic vesicles during the formation of the neuromuscular junction; stimulating lobuloalveolar budding and milk production in the mammary gland and inducing differentiation of mammary tumor cells; stimulating Schwann cell proliferation; implication in the development of the myocardium such as trabeculation of the developing heart. Binds to ERBB4 and ERBB3. Acts as a ligand for integrins and binds (via EGF domain) to integrins ITGAV:ITGB3 or ITGA6:ITGB4. Its binding to integrins and subsequent ternary complex formation with integrins and ERRB3 are essential for NRG1-ERBB signaling. Induces the phosphorylation and activation of MAPK3/ERK1, MAPK1/ERK2 and AKT1, and ligand-dependent ERBB4 endocytosis is essential for the NRG1-mediated activation of these kinases in neurons. This chain is Pro-neuregulin-1, membrane-bound isoform, found in Mus musculus (Mouse).